The primary structure comprises 292 residues: ATP synthase gamma chain (292 aa).

Belongs to the ATPase gamma chain family. In terms of assembly, F-type ATPases have 2 components, CF(1) - the catalytic core - and CF(0) - the membrane proton channel. CF(1) has five subunits: alpha(3), beta(3), gamma(1), delta(1), epsilon(1). CF(0) has three main subunits: a, b and c.

It localises to the cell inner membrane. Produces ATP from ADP in the presence of a proton gradient across the membrane. The gamma chain is believed to be important in regulating ATPase activity and the flow of protons through the CF(0) complex. This Magnetococcus marinus (strain ATCC BAA-1437 / JCM 17883 / MC-1) protein is ATP synthase gamma chain.